The sequence spans 214 residues: Protein-L-isoaspartate O-methyltransferase (214 aa).

Ser-63 is an active-site residue.

The protein belongs to the methyltransferase superfamily. L-isoaspartyl/D-aspartyl protein methyltransferase family.

The protein localises to the cytoplasm. The enzyme catalyses [protein]-L-isoaspartate + S-adenosyl-L-methionine = [protein]-L-isoaspartate alpha-methyl ester + S-adenosyl-L-homocysteine. In terms of biological role, catalyzes the methyl esterification of L-isoaspartyl residues in peptides and proteins that result from spontaneous decomposition of normal L-aspartyl and L-asparaginyl residues. It plays a role in the repair and/or degradation of damaged proteins. This is Protein-L-isoaspartate O-methyltransferase from Desulfotalea psychrophila (strain LSv54 / DSM 12343).